A 504-amino-acid chain; its full sequence is Probable cytochrome P450 305a1 (504 aa).

Residue Cys450 coordinates heme.

This sequence belongs to the cytochrome P450 family. Heme is required as a cofactor.

It localises to the endoplasmic reticulum membrane. Its subcellular location is the microsome membrane. Its function is as follows. May be involved in the metabolism of insect hormones and in the breakdown of synthetic insecticides. In Drosophila melanogaster (Fruit fly), this protein is Probable cytochrome P450 305a1 (Cyp305a1).